A 153-amino-acid chain; its full sequence is Riboflavin synthase (153 aa).

The protein belongs to the DMRL synthase family.

The catalysed reaction is 2 6,7-dimethyl-8-(1-D-ribityl)lumazine + H(+) = 5-amino-6-(D-ribitylamino)uracil + riboflavin. The protein operates within cofactor biosynthesis; riboflavin biosynthesis; riboflavin from 2-hydroxy-3-oxobutyl phosphate and 5-amino-6-(D-ribitylamino)uracil: step 2/2. The protein is Riboflavin synthase (ribC) of Archaeoglobus fulgidus (strain ATCC 49558 / DSM 4304 / JCM 9628 / NBRC 100126 / VC-16).